Consider the following 216-residue polypeptide: Probable transaldolase (216 aa).

Residue Lys84 is the Schiff-base intermediate with substrate of the active site.

The protein belongs to the transaldolase family. Type 3B subfamily.

It is found in the cytoplasm. It catalyses the reaction D-sedoheptulose 7-phosphate + D-glyceraldehyde 3-phosphate = D-erythrose 4-phosphate + beta-D-fructose 6-phosphate. The protein operates within carbohydrate degradation; pentose phosphate pathway; D-glyceraldehyde 3-phosphate and beta-D-fructose 6-phosphate from D-ribose 5-phosphate and D-xylulose 5-phosphate (non-oxidative stage): step 2/3. Functionally, transaldolase is important for the balance of metabolites in the pentose-phosphate pathway. The protein is Probable transaldolase of Lysinibacillus sphaericus (strain C3-41).